Consider the following 444-residue polypeptide: RAC family serine/threonine-protein kinase homolog (444 aa).

The 96-residue stretch at 5–100 (PIKHEGFLTK…WIEILINERE (96 aa)) folds into the PH domain. A Protein kinase domain is found at 120–374 (FELLNLVGKG…PNLIKRHPFF (255 aa)). ATP is bound by residues 126-134 (VGKGSFGKV) and Lys-149. Residue Asp-243 is the Proton acceptor of the active site. Position 278 is a phosphothreonine (Thr-278). Residues 375-444 (RSIDWEQLFQ…TYVAESEHLR (70 aa)) enclose the AGC-kinase C-terminal domain.

This sequence belongs to the protein kinase superfamily. AGC Ser/Thr protein kinase family. RAC subfamily.

The catalysed reaction is L-seryl-[protein] + ATP = O-phospho-L-seryl-[protein] + ADP + H(+). The enzyme catalyses L-threonyl-[protein] + ATP = O-phospho-L-threonyl-[protein] + ADP + H(+). Functionally, predominantly involved during the aggregation to control cell polarity and chemotaxis. Phosphorylates talB, gefN, gefS, PI4P 5-kinase and gacQ. In Dictyostelium discoideum (Social amoeba), this protein is RAC family serine/threonine-protein kinase homolog (pkbA).